Here is a 149-residue protein sequence, read N- to C-terminus: 3-dehydroquinate dehydratase (149 aa).

Catalysis depends on Tyr-26, which acts as the Proton acceptor. Asn-77, His-83, and Asp-90 together coordinate substrate. The active-site Proton donor is the His-103. Substrate contacts are provided by residues 104-105 and Arg-114; that span reads LS.

The protein belongs to the type-II 3-dehydroquinase family. In terms of assembly, homododecamer.

The catalysed reaction is 3-dehydroquinate = 3-dehydroshikimate + H2O. It participates in metabolic intermediate biosynthesis; chorismate biosynthesis; chorismate from D-erythrose 4-phosphate and phosphoenolpyruvate: step 3/7. Functionally, catalyzes a trans-dehydration via an enolate intermediate. The polypeptide is 3-dehydroquinate dehydratase (aroQ) (Haemophilus influenzae (strain ATCC 51907 / DSM 11121 / KW20 / Rd)).